The chain runs to 513 residues: MDPSSAGSGGNSLPSVGPDGQKRRVCYFYDPDVGNYYYGQGHPMKPHRIRMTHSLLARYGLLNQMQVYRPNPARERELCRFHAEEYINFLRSVTPETQQDQIRLLKRFNVGEECPVLDGLYSFCQTYAGASVGGAVKFNHGHDIAINWSGGLHHAKKCEASGFCYVNDIVLAILELLKHHERVLYVDIDIHHGDGVEEAFYTTDRVMTVSFHKFGDYFPGTGDIRDIGHSKGKYYSLNVPLDDGIDDESYQSLFKPIMGKVMEVFRPGAVVLQCGADSLSGDRLGCFNLSIKGHAECVRYMRSFNVPLLLLGGGGYTIRNVARCWCYETGVALGQEPEDKMPVNEYYEYFGPDYTLHVAPSNMENKNTRQQLDDIRSKLSKLRHAPSVHFQERVPDTEIPEQDEDQDDPDERHDPDSDMEVDDHKAVEESSRRSILGIKIKREFGENATRVQDGGRVASEHRGLEPMAEDIGSSKQAPQADASAMAIDEPSNVKNEPESSTKLQGQAAAYHKP.

A histone deacetylase region spans residues 23–334; the sequence is RRVCYFYDPD…WCYETGVALG (312 aa). Residue His-154 is the Proton donor/acceptor of the active site. 3 residues coordinate Zn(2+): Asp-189, His-191, and Asp-277. Disordered stretches follow at residues 384-432 and 446-513; these read HAPS…ESSR and ENAT…YHKP. Acidic residues predominate over residues 398–409; that stretch reads EIPEQDEDQDDP. The segment covering 410–432 has biased composition (basic and acidic residues); it reads DERHDPDSDMEVDDHKAVEESSR. A compositionally biased stretch (polar residues) spans 492–504; the sequence is NVKNEPESSTKLQ.

The protein belongs to the histone deacetylase family. HD type 1 subfamily. Zn(2+) is required as a cofactor.

Its subcellular location is the nucleus. The enzyme catalyses N(6)-acetyl-L-lysyl-[histone] + H2O = L-lysyl-[histone] + acetate. Its function is as follows. Responsible for the deacetylation of lysine residues on the N-terminal part of the core histones (H2A, H2B, H3 and H4). Histone deacetylation gives a tag for epigenetic repression and plays an important role in transcriptional regulation, cell cycle progression and developmental events. Histone deacetylases act via the formation of large multiprotein complexes. In Zea mays (Maize), this protein is Probable histone deacetylase 19.